A 778-amino-acid polypeptide reads, in one-letter code: Lon protease (778 aa).

One can recognise a Lon N-terminal domain in the interval 4 to 187 (LPVLPLTDAV…LLVGWVRAHL (184 aa)). 346–353 (GPPGVGKT) lines the ATP pocket. One can recognise a Lon proteolytic domain in the interval 581–762 (TAVPGVATGL…ADVLALALRP (182 aa)). Active-site residues include Ser668 and Lys711.

This sequence belongs to the peptidase S16 family. Homohexamer. Organized in a ring with a central cavity.

It is found in the cytoplasm. It carries out the reaction Hydrolysis of proteins in presence of ATP.. Functionally, ATP-dependent serine protease that mediates the selective degradation of mutant and abnormal proteins as well as certain short-lived regulatory proteins. Required for cellular homeostasis and for survival from DNA damage and developmental changes induced by stress. Degrades polypeptides processively to yield small peptide fragments that are 5 to 10 amino acids long. Binds to DNA in a double-stranded, site-specific manner. The chain is Lon protease from Salinispora arenicola (strain CNS-205).